Consider the following 1182-residue polypeptide: Retrotransposable element SLACS 132 kDa protein (1182 aa).

Disordered stretches follow at residues 77–97, 163–220, 317–339, and 418–478; these read GERS…PRER, DVLD…STDQ, RRKR…ALRL, and RTAR…STAP. Positions 163–174 are enriched in acidic residues; sequence DVLDEEEQDDDL. Residues 420 to 446 show a composition bias toward basic and acidic residues; sequence ARREQQQQRGKDNQEEEDRQKKEEKSL. Polar residues predominate over residues 456–475; sequence SVRQGGQPSSSQPKRLNRWS. A Reverse transcriptase domain is found at 560-790; the sequence is NADVSMEVGR…TGDTGFGTAV (231 aa).

It carries out the reaction DNA(n) + a 2'-deoxyribonucleoside 5'-triphosphate = DNA(n+1) + diphosphate. The polypeptide is Retrotransposable element SLACS 132 kDa protein (Trypanosoma brucei gambiense).